We begin with the raw amino-acid sequence, 401 residues long: Acetate kinase (401 aa).

A Mg(2+)-binding site is contributed by Asn-9. Residue Lys-16 coordinates ATP. Arg-88 lines the substrate pocket. The Proton donor/acceptor role is filled by Asp-147. ATP-binding positions include 207 to 211 (HLGNG), 282 to 284 (DCR), and 333 to 337 (GIGEN). Glu-388 serves as a coordination point for Mg(2+).

The protein belongs to the acetokinase family. As to quaternary structure, homodimer. Requires Mg(2+) as cofactor. The cofactor is Mn(2+).

It is found in the cytoplasm. It catalyses the reaction acetate + ATP = acetyl phosphate + ADP. It participates in metabolic intermediate biosynthesis; acetyl-CoA biosynthesis; acetyl-CoA from acetate: step 1/2. Functionally, catalyzes the formation of acetyl phosphate from acetate and ATP. Can also catalyze the reverse reaction. This Haemophilus influenzae (strain ATCC 51907 / DSM 11121 / KW20 / Rd) protein is Acetate kinase.